Here is a 179-residue protein sequence, read N- to C-terminus: Peptidyl-tRNA hydrolase (179 aa).

Position 14 (Tyr-14) interacts with tRNA. His-19 functions as the Proton acceptor in the catalytic mechanism. TRNA contacts are provided by Tyr-60, Asn-62, and Asn-108.

It belongs to the PTH family. As to quaternary structure, monomer.

The protein localises to the cytoplasm. It carries out the reaction an N-acyl-L-alpha-aminoacyl-tRNA + H2O = an N-acyl-L-amino acid + a tRNA + H(+). Its function is as follows. Hydrolyzes ribosome-free peptidyl-tRNAs (with 1 or more amino acids incorporated), which drop off the ribosome during protein synthesis, or as a result of ribosome stalling. Functionally, catalyzes the release of premature peptidyl moieties from peptidyl-tRNA molecules trapped in stalled 50S ribosomal subunits, and thus maintains levels of free tRNAs and 50S ribosomes. In Mycoplasma mobile (strain ATCC 43663 / 163K / NCTC 11711) (Mesomycoplasma mobile), this protein is Peptidyl-tRNA hydrolase.